Reading from the N-terminus, the 122-residue chain is MAPQKDKKPKKSTWRFHLDLTHPVEDGIFDSGNFEQFLREKVKVNGKTGNLGNVVHIERLKNKITVVSEKQFSKRYLKYLTKKYLKKNNLRDWLRVVASDKETYELRYFQISQDEDGSESED.

3 positions are modified to phosphoserine: serine 112, serine 118, and serine 120.

The protein belongs to the eukaryotic ribosomal protein eL22 family.

The chain is Ribosomal protein eL22-like 1 (Rpl22l1) from Mus musculus (Mouse).